We begin with the raw amino-acid sequence, 249 residues long: MRLIHIPALESNYIWLLADSNQHCVIVDPGEASPVESVLTYKGLLPQAILLTHHHQDHLGGVPQLLRRFPDIPVYGPKETNKKGATILLKEGDQLFICSQTFSVIEVPGHTLGHIAYYSAPYLFCGDTLFSAGCGRLFEGTADQMYDSIQKLIQLPDETLICAGHEYTLSNLKFARSILPDDPQIALYQKQAEQLKAKNQPTLPALLKLERQVNLFLRCKESFLQKKMGTHKHDPLSVFSTLREMKDRF.

Zn(2+)-binding residues include His-53, His-55, Asp-57, His-58, His-110, Asp-127, and His-165.

It belongs to the metallo-beta-lactamase superfamily. Glyoxalase II family. Monomer. Requires Zn(2+) as cofactor.

It carries out the reaction an S-(2-hydroxyacyl)glutathione + H2O = a 2-hydroxy carboxylate + glutathione + H(+). The protein operates within secondary metabolite metabolism; methylglyoxal degradation; (R)-lactate from methylglyoxal: step 2/2. In terms of biological role, thiolesterase that catalyzes the hydrolysis of S-D-lactoyl-glutathione to form glutathione and D-lactic acid. The chain is Hydroxyacylglutathione hydrolase from Hamiltonella defensa subsp. Acyrthosiphon pisum (strain 5AT).